Here is an 80-residue protein sequence, read N- to C-terminus: Serine protease inhibitor Kazal-type 6 (80 aa).

The first 23 residues, 1 to 23 (MKLSGMFLLLSLALFCFLTGVFS), serve as a signal peptide directing secretion. A Pyrrolidone carboxylic acid modification is found at Q24. Residues 24-80 (QGGQVDCGEFQDPKVYCTRESNPHCGSDGQTYGNKCAFCKAIVKSGGKISLKHPGKC) form the Kazal-like domain. 3 cysteine pairs are disulfide-bonded: C30/C62, C40/C59, and C48/C80.

Its subcellular location is the secreted. Its function is as follows. Serine protease inhibitor selective for kallikreins. Efficiently inhibits KLK4, KLK5, KLK6, KLK7, KLK12, KLK13 and KLK14. Doesn't inhibit KLK8. This Homo sapiens (Human) protein is Serine protease inhibitor Kazal-type 6 (SPINK6).